Reading from the N-terminus, the 585-residue chain is Aspartate--tRNA ligase (585 aa).

Glu173 is a binding site for L-aspartate. Positions 197–200 (QTLK) are aspartate. Arg219 provides a ligand contact to L-aspartate. Residues 219-221 (RDE) and Gln228 contribute to the ATP site. His446 provides a ligand contact to L-aspartate. Position 480 (Glu480) interacts with ATP. Arg487 is an L-aspartate binding site. 532-535 (GLDR) is a binding site for ATP.

The protein belongs to the class-II aminoacyl-tRNA synthetase family. Type 1 subfamily. As to quaternary structure, homodimer.

It localises to the cytoplasm. The catalysed reaction is tRNA(Asp) + L-aspartate + ATP = L-aspartyl-tRNA(Asp) + AMP + diphosphate. Catalyzes the attachment of L-aspartate to tRNA(Asp) in a two-step reaction: L-aspartate is first activated by ATP to form Asp-AMP and then transferred to the acceptor end of tRNA(Asp). This chain is Aspartate--tRNA ligase, found in Parabacteroides distasonis (strain ATCC 8503 / DSM 20701 / CIP 104284 / JCM 5825 / NCTC 11152).